Reading from the N-terminus, the 123-residue chain is Small ribosomal subunit protein bS16 (123 aa).

Residues 79 to 123 (AGIAKRPSRNNPTKGEPGKKAQERLALAKQAEEEAAAKAAEAASE) form a disordered region.

The protein belongs to the bacterial ribosomal protein bS16 family.

The polypeptide is Small ribosomal subunit protein bS16 (Brucella melitensis biotype 2 (strain ATCC 23457)).